The following is a 661-amino-acid chain: Serine/threonine-protein phosphatase rdgC (661 aa).

Positions 7–32 (RAAIFIQKWYRRHQARREMQRRCNWQ) constitute an IQ domain. Residues 105–413 (IDLLIDVFRK…HFVQYISAAS (309 aa)) are catalytic. The Mn(2+) site is built by aspartate 158, histidine 160, aspartate 187, and asparagine 219. The active-site Proton donor is the histidine 220. The Mn(2+) site is built by histidine 271 and histidine 360. 3 consecutive EF-hand domains span residues 441 to 476 (DHRDELEDEFRKYDPKDSGYISISHWCKVMENVTKL), 526 to 561 (ANKASLVAIFNIIDADNSGEITLDEFETAIDLLVAH), and 566 to 601 (YSKAEMLEKCRMMDLNGDGKVDLNEFLEAFRLSDLH). 10 residues coordinate Ca(2+): aspartate 539, aspartate 541, serine 543, glutamate 545, glutamate 550, aspartate 579, asparagine 581, aspartate 583, lysine 585, and glutamate 590. Positions 606–625 (QDENIRRRSTGRPSVAKTAT) are disordered.

Belongs to the PPP phosphatase family. Mn(2+) serves as cofactor. Expressed in the visual system of the fly, as well as in the mushroom bodies of the central brain.

It catalyses the reaction O-phospho-L-seryl-[protein] + H2O = L-seryl-[protein] + phosphate. The enzyme catalyses O-phospho-L-threonyl-[protein] + H2O = L-threonyl-[protein] + phosphate. Functionally, phosphatase required to prevent light-induced retinal degeneration. The chain is Serine/threonine-protein phosphatase rdgC (rdgC) from Drosophila melanogaster (Fruit fly).